A 4008-amino-acid polypeptide reads, in one-letter code: Extracellular matrix organizing protein FRAS1 (4008 aa).

The signal sequence occupies residues 1-26 (MGVLKVWLGLALALAEFAVLPHHSEG). VWFC domains follow at residues 27-88 (ACVY…PECV), 93-153 (GSCH…PVCV), 157-217 (KPCS…PQCS), 219-279 (RSCS…EECV), and 283-343 (GSCS…PECI). Residues 27–3901 (ACVYQDSLLA…AASLSQTGAS (3875 aa)) lie on the Extracellular side of the membrane. Serine 344 carries the phosphoserine modification. Residues 347–417 (GYCVYEETGE…VKGQCCPDCT (71 aa)) enclose the VWFC 6 domain. Residue asparagine 361 is glycosylated (N-linked (GlcNAc...) asparagine). FU repeat units follow at residues 409 to 460 (KGQC…GFYQ), 462 to 505 (GSLC…GFYQ), 507 to 553 (RHSC…GFYN), 555 to 599 (QGTC…GYYA), 602 to 647 (TGRC…GFYS), 649 to 705 (HGVC…HFYL), 708 to 753 (TGIC…GYFH), 755 to 800 (EGSC…EQFL), 803 to 852 (VGYC…GYYA), 854 to 900 (RGAC…GHYL), 903 to 948 (NHVC…QYYL), 952 to 997 (TNTC…SFYQ), 999 to 1042 (SGLC…GYFA), and 1046 to 1089 (KHKC…GFSV). An N-linked (GlcNAc...) asparagine glycan is attached at asparagine 728. Asparagine 1093 and asparagine 1108 each carry an N-linked (GlcNAc...) asparagine glycan. CSPG repeat units follow at residues 1102-1197 (TPSL…LKIS), 1217-1308 (APYV…LQAN), 1329-1438 (GLQL…FEVS), 1463-1559 (APKV…FSFA), 1595-1689 (PVFQ…ISVT), 1710-1810 (GPRL…FSVS), and 1833-1936 (PPVI…FYVS). An N-linked (GlcNAc...) asparagine glycan is attached at asparagine 1504. A glycan (N-linked (GlcNAc...) asparagine) is linked at asparagine 1777. N-linked (GlcNAc...) asparagine glycans are attached at residues asparagine 1948 and asparagine 1978. CSPG repeat units follow at residues 1957-2057 (EPPR…FSLT), 2078-2177 (TPHL…FDVV), 2199-2291 (PPVI…FTLS), 2311-2404 (SLPV…FTVS), and 2439-2536 (TPRI…FLVK). 5 consecutive Calx-beta domains span residues 2543–2646 (VSDN…VELS), 2659–2770 (AKVI…IALA), 2784–2890 (AKVL…VFLS), 2905–3007 (IAIN…VYLG), and 3025–3129 (ATIT…LVLG). N-linked (GlcNAc...) asparagine glycans are attached at residues asparagine 2563, asparagine 2664, and asparagine 2682. Asparagine 2908, asparagine 2985, asparagine 3070, asparagine 3218, asparagine 3676, and asparagine 3875 each carry an N-linked (GlcNAc...) asparagine glycan. A helical membrane pass occupies residues 3902–3922 (IGSALAAIMLLLLVFLVACFI). The Cytoplasmic segment spans residues 3923–4008 (NRKCQKQRKK…HNNLQDGTEV (86 aa)).

The protein belongs to the FRAS1 family. In terms of tissue distribution, expressed in many adult tissues, with highest levels in kidney, pancreas and thalamus. Relatively high expression was also detected in fetal kidney and heart.

Its subcellular location is the cell membrane. In terms of biological role, involved in extracellular matrix organization. Required for the regulation of epidermal-basement membrane adhesion responsible for proper organogenesis during embryonic development. Involved in brain organization and function. The chain is Extracellular matrix organizing protein FRAS1 from Homo sapiens (Human).